The sequence spans 247 residues: Oil body-associated protein 2B (247 aa).

The segment at 1-28 is disordered; sequence MASSDKVPVACPASSGDGKEPMGNPTKT.

It belongs to the OBAP family.

The sequence is that of Oil body-associated protein 2B from Arabidopsis thaliana (Mouse-ear cress).